The following is a 488-amino-acid chain: Catalase (488 aa).

Residues 1–24 (MTDRRNLTTNQGVPIGDNQNSMTA) form a disordered region. A compositionally biased stretch (polar residues) spans 7 to 23 (LTTNQGVPIGDNQNSMT). Residues His-55 and Asn-128 contribute to the active site. Residue Tyr-338 coordinates heme.

It belongs to the catalase family. Heme serves as cofactor.

Its subcellular location is the cytoplasm. It catalyses the reaction 2 H2O2 = O2 + 2 H2O. In terms of biological role, decomposes hydrogen peroxide into water and oxygen; serves to protect cells from the toxic effects of hydrogen peroxide. In Listeria seeligeri, this protein is Catalase (kat).